A 381-amino-acid polypeptide reads, in one-letter code: Alkanesulfonate monooxygenase (381 aa).

Belongs to the SsuD family. As to quaternary structure, homotetramer.

The catalysed reaction is an alkanesulfonate + FMNH2 + O2 = an aldehyde + FMN + sulfite + H2O + 2 H(+). Catalyzes the desulfonation of aliphatic sulfonates. In Escherichia coli O17:K52:H18 (strain UMN026 / ExPEC), this protein is Alkanesulfonate monooxygenase.